The primary structure comprises 453 residues: Serine--tRNA ligase (453 aa).

An L-serine-binding site is contributed by 252–254 (TAE). ATP-binding positions include 283 to 285 (RKE) and valine 299. Glutamate 306 is an L-serine binding site. 370 to 373 (EMVS) serves as a coordination point for ATP. Threonine 405 lines the L-serine pocket.

The protein belongs to the class-II aminoacyl-tRNA synthetase family. Type-1 seryl-tRNA synthetase subfamily. As to quaternary structure, homodimer. The tRNA molecule binds across the dimer.

Its subcellular location is the cytoplasm. The catalysed reaction is tRNA(Ser) + L-serine + ATP = L-seryl-tRNA(Ser) + AMP + diphosphate + H(+). It catalyses the reaction tRNA(Sec) + L-serine + ATP = L-seryl-tRNA(Sec) + AMP + diphosphate + H(+). It functions in the pathway aminoacyl-tRNA biosynthesis; selenocysteinyl-tRNA(Sec) biosynthesis; L-seryl-tRNA(Sec) from L-serine and tRNA(Sec): step 1/1. In terms of biological role, catalyzes the attachment of serine to tRNA(Ser). Is also able to aminoacylate tRNA(Sec) with serine, to form the misacylated tRNA L-seryl-tRNA(Sec), which will be further converted into selenocysteinyl-tRNA(Sec). The sequence is that of Serine--tRNA ligase from Sulfurisphaera tokodaii (strain DSM 16993 / JCM 10545 / NBRC 100140 / 7) (Sulfolobus tokodaii).